The primary structure comprises 445 residues: Adenylosuccinate synthetase (445 aa).

GTP is bound by residues Gly-24–Lys-30 and Gly-52–Thr-54. The active-site Proton acceptor is Asp-25. Mg(2+)-binding residues include Asp-25 and Gly-52. IMP contacts are provided by residues Asp-25–Lys-28, Asn-50–His-53, Thr-147, Arg-161, Asn-238, Thr-253, and Arg-317. His-53 acts as the Proton donor in catalysis. Thr-313–Arg-319 lines the substrate pocket. GTP contacts are provided by residues Arg-319, Lys-345 to Asp-347, and Gly-427 to Gly-429.

Belongs to the adenylosuccinate synthetase family. In terms of assembly, homodimer. Mg(2+) is required as a cofactor.

Its subcellular location is the cytoplasm. It carries out the reaction IMP + L-aspartate + GTP = N(6)-(1,2-dicarboxyethyl)-AMP + GDP + phosphate + 2 H(+). It functions in the pathway purine metabolism; AMP biosynthesis via de novo pathway; AMP from IMP: step 1/2. Its function is as follows. Plays an important role in the de novo pathway and in the salvage pathway of purine nucleotide biosynthesis. Catalyzes the first committed step in the biosynthesis of AMP from IMP. The protein is Adenylosuccinate synthetase of Malassezia globosa (strain ATCC MYA-4612 / CBS 7966) (Dandruff-associated fungus).